The chain runs to 273 residues: Protein GMH1 (273 aa).

The tract at residues 1-33 (MSYLPTYSNDLPAGPQGQRRRNNGNENDARQGY) is disordered. Ser-2 bears the N-acetylserine mark. Over 2 to 89 (SYLPTYSNDL…QTKNQWARDD (88 aa)) the chain is Cytoplasmic. A helical transmembrane segment spans residues 90 to 110 (PSFFIFQIALISLSSIIWSIY). Residues 111-134 (NSGFNNDSDMGALSIIGHFFKSLV) lie on the Lumenal side of the membrane. The chain crosses the membrane as a helical span at residues 135–155 (MMVILDFFIFGFIMATIFYLL). The Cytoplasmic portion of the chain corresponds to 156–175 (LNRSHFKFKSSQNSVVEWAY). Residues 176 to 196 (CFDVHCNSFLIILLCLYFIQF) traverse the membrane as a helical segment. Topologically, residues 197–216 (LLLPIINLQNWISLLIGNSL) are lumenal. A helical membrane pass occupies residues 217–237 (YCFAIGHYFILTFYGYNQLPF). Over 238 to 242 (LKNLN) the chain is Cytoplasmic. Residues 243–263 (FILLPTLGLSIIYLISLFGID) traverse the membrane as a helical segment. Topologically, residues 264–273 (LSKKLSFYNY) are lumenal.

This sequence belongs to the unc-50 family. In terms of assembly, interacts with GEA1 and GEA2.

Its subcellular location is the golgi apparatus membrane. It localises to the endoplasmic reticulum membrane. This chain is Protein GMH1 (GMH1), found in Saccharomyces cerevisiae (strain ATCC 204508 / S288c) (Baker's yeast).